A 227-amino-acid chain; its full sequence is Chalcone--flavanone isomerase (227 aa).

Substrate contacts are provided by threonine 50, asparagine 115, and serine 192.

It belongs to the chalcone isomerase family. Fibers.

It catalyses the reaction a chalcone = a flavanone.. Its pathway is secondary metabolite biosynthesis; flavonoid biosynthesis. Catalyzes the intramolecular cyclization of bicyclic chalcones into tricyclic (S)-flavanones. Responsible for the isomerization of 4,2',4',6'-tetrahydroxychalcone (also termed chalcone) into naringenin. This Gossypium hirsutum (Upland cotton) protein is Chalcone--flavanone isomerase (CHI).